The primary structure comprises 162 residues: Shikimate kinase (162 aa).

11 to 16 contacts ATP; sequence GSGKSS. Position 15 (S15) interacts with Mg(2+). Substrate-binding residues include D33, R57, and G80. R116 lines the ATP pocket. R132 lines the substrate pocket.

Belongs to the shikimate kinase family. As to quaternary structure, monomer. It depends on Mg(2+) as a cofactor.

The protein resides in the cytoplasm. The enzyme catalyses shikimate + ATP = 3-phosphoshikimate + ADP + H(+). It functions in the pathway metabolic intermediate biosynthesis; chorismate biosynthesis; chorismate from D-erythrose 4-phosphate and phosphoenolpyruvate: step 5/7. Catalyzes the specific phosphorylation of the 3-hydroxyl group of shikimic acid using ATP as a cosubstrate. This chain is Shikimate kinase, found in Helicobacter pylori (strain G27).